Here is a 289-residue protein sequence, read N- to C-terminus: Phospholipase C (289 aa).

The first 25 residues, 1–25 (MKFKKVVLGMCLIASVLVFPVTIKA), serve as a signal peptide directing secretion. Residues 26 to 51 (NACCDEYLQTPAAPHDIDSKLPHKLS) constitute a propeptide that is removed on maturation. Zn(2+)-binding residues include Trp52, His65, Asp106, His120, His169, Asp173, His179, His193, and Glu197. Positions 52 to 289 (WSADNPTNTD…LEFWSKKTNE (238 aa)) constitute a Zn-dependent PLC domain.

Belongs to the bacterial zinc-metallophospholipase C family. As to quaternary structure, forms monomers, dimers and higher order oligomers, but only the monomer is enzymatically active. The cofactor is Zn(2+).

Its subcellular location is the secreted. The enzyme catalyses a 1,2-diacyl-sn-glycero-3-phosphocholine + H2O = phosphocholine + a 1,2-diacyl-sn-glycerol + H(+). It carries out the reaction 1,2-dihexadecanoyl-sn-glycero-3-phosphocholine + H2O = 1,2-dihexadecanoyl-sn-glycerol + phosphocholine + H(+). The catalysed reaction is 1-hexadecanoyl-2-(9Z-octadecenoyl)-sn-glycero-3-phosphocholine + H2O = 1-hexadecanoyl-2-(9Z-octadecenoyl)-sn-glycerol + phosphocholine + H(+). It catalyses the reaction 1,2-di-(9Z-octadecenoyl)-sn-glycero-3-phosphocholine + H2O = 1,2-di-(9Z-octadecenoyl)-sn-glycerol + phosphocholine + H(+). The enzyme catalyses a 1,2-diacyl-sn-glycero-3-phosphoethanolamine + H2O = phosphoethanolamine + a 1,2-diacyl-sn-glycerol + H(+). It carries out the reaction 1,2-di-(9Z-octadecenoyl)-sn-glycero-3-phosphoethanolamine + H2O = phosphoethanolamine + 1,2-di-(9Z-octadecenoyl)-sn-glycerol + H(+). The catalysed reaction is 1,2-dihexadecanoyl-sn-glycero-3-phosphoethanolamine + H2O = 1,2-dihexadecanoyl-sn-glycerol + phosphoethanolamine + H(+). It catalyses the reaction a 1,2-diacyl-sn-glycero-3-phospho-L-serine + H2O = O-phospho-L-serine + a 1,2-diacyl-sn-glycerol + H(+). The enzyme catalyses a 1,2-diacyl-sn-glycero-3-phosphoglycerol + H2O = glycerol 1-phosphate + a 1,2-diacyl-sn-glycerol + H(+). It carries out the reaction a 1,2-diacyl-sn-glycero-3-phospho-(1D-myo-inositol) + H2O = 1D-myo-inositol 1-phosphate + a 1,2-diacyl-sn-glycerol + H(+). The catalysed reaction is a sphingomyelin + H2O = phosphocholine + an N-acylsphing-4-enine + H(+). It catalyses the reaction a 1-O-(1Z-alkenyl)-2-acyl-sn-glycero-3-phosphoethanolamine + H2O = a 1-O-(1Z-alkenyl)-2-acyl-sn-glycerol + phosphoethanolamine + H(+). Enzymatic activity of LmPC-PLC can be specifically inhibited by its propeptide added in trans. The tendency of the enzyme to oligomerize, which appears to largely attenuate the enzymatic activity, may be one of the mechanisms regulating phospholipase activity in the host cell during the different steps of the infection cycle of L.monocytogenes. Enzyme activity is inhibited by EDTA and o-phenanthroline in vitro. Major virulence factor whose phospholipase activity facilitates pore formation by the pore-forming toxin listeriolysin O (LLO), leading to vacuolar membrane disruption and vacuolar escape of L.monocytogenes, which enables the bacterium to spread in the host. Acts as a phospholipase C exhibiting broad substrate specificity, with the highest activities towards diacylglycerophospholipids with phosphocholine, phosphoserine, and phosphoethanolamine head groups, but less towards phosphoglycerol or phosphoinositol head groups. Is also able to hydrolyze sphingomyelin and plasmenylethanolamine. The chain is Phospholipase C from Listeria monocytogenes serovar 1/2a (strain ATCC BAA-679 / EGD-e).